The chain runs to 83 residues: EMBRYO SURROUNDING FACTOR 1.1 (83 aa).

The N-terminal stretch at 1–22 is a signal peptide; sequence MKSSHTSLICILMLSLVALHQC. Cystine bridges form between cysteine 41-cysteine 56, cysteine 46-cysteine 75, cysteine 54-cysteine 71, and cysteine 57-cysteine 64.

The protein belongs to the MEG family. Expressed exclusively in ovule embryo sacs and in early developing endosperms.

In terms of biological role, maternally-contributed central cell peptide regulating suspensor development and correct auxin distribution in early developing embryos. This is EMBRYO SURROUNDING FACTOR 1.1 (ESF1.1) from Arabidopsis thaliana (Mouse-ear cress).